A 252-amino-acid chain; its full sequence is Small ribosomal subunit protein uS2B (252 aa).

Ser2 bears the N-acetylserine mark. Acidic residues-rich tracts occupy residues 213–229 and 241–252; these read VAEE…EEVK and EWAEENADNVEW. A disordered region spans residues 213 to 252; sequence VAEEAAAAEEGEEEEVKEEVTEGQAEATEWAEENADNVEW.

This sequence belongs to the universal ribosomal protein uS2 family. In terms of assembly, component of the small ribosomal subunit. Mature ribosomes consist of a small (40S) and a large (60S) subunit. The 40S subunit contains about 33 different proteins and 1 molecule of RNA (18S). The 60S subunit contains about 49 different proteins and 3 molecules of RNA (25S, 5.8S and 5S). Interacts with RPS21.

It localises to the cytoplasm. In terms of biological role, required for the assembly and/or stability of the 40S ribosomal subunit. Required for the processing of the 20S rRNA-precursor to mature 18S rRNA in a late step of the maturation of 40S ribosomal subunits. The polypeptide is Small ribosomal subunit protein uS2B (Saccharomyces cerevisiae (strain RM11-1a) (Baker's yeast)).